A 72-amino-acid chain; its full sequence is Small ribosomal subunit protein bS18 (72 aa).

This sequence belongs to the bacterial ribosomal protein bS18 family. Part of the 30S ribosomal subunit. Forms a tight heterodimer with protein bS6.

Functionally, binds as a heterodimer with protein bS6 to the central domain of the 16S rRNA, where it helps stabilize the platform of the 30S subunit. The protein is Small ribosomal subunit protein bS18 of Fusobacterium nucleatum subsp. nucleatum (strain ATCC 25586 / DSM 15643 / BCRC 10681 / CIP 101130 / JCM 8532 / KCTC 2640 / LMG 13131 / VPI 4355).